Consider the following 104-residue polypeptide: L-rhamnose mutarotase (104 aa).

Residue Tyr-18 coordinates substrate. His-22 functions as the Proton donor in the catalytic mechanism. Residues Tyr-41 and Trp-76–Trp-77 contribute to the substrate site.

Belongs to the rhamnose mutarotase family. As to quaternary structure, homodimer.

It localises to the cytoplasm. It catalyses the reaction alpha-L-rhamnose = beta-L-rhamnose. It participates in carbohydrate metabolism; L-rhamnose metabolism. In terms of biological role, involved in the anomeric conversion of L-rhamnose. The chain is L-rhamnose mutarotase from Lachnoclostridium phytofermentans (strain ATCC 700394 / DSM 18823 / ISDg) (Clostridium phytofermentans).